The chain runs to 357 residues: Phosphoribosylformylglycinamidine cyclo-ligase (357 aa).

It belongs to the AIR synthase family.

Its subcellular location is the cytoplasm. It catalyses the reaction 2-formamido-N(1)-(5-O-phospho-beta-D-ribosyl)acetamidine + ATP = 5-amino-1-(5-phospho-beta-D-ribosyl)imidazole + ADP + phosphate + H(+). It participates in purine metabolism; IMP biosynthesis via de novo pathway; 5-amino-1-(5-phospho-D-ribosyl)imidazole from N(2)-formyl-N(1)-(5-phospho-D-ribosyl)glycinamide: step 2/2. In Agrobacterium fabrum (strain C58 / ATCC 33970) (Agrobacterium tumefaciens (strain C58)), this protein is Phosphoribosylformylglycinamidine cyclo-ligase.